The sequence spans 298 residues: N-acetylmuramic acid 6-phosphate etherase (298 aa).

In terms of domain architecture, SIS spans I55 to K218. The active-site Proton donor is E83. E114 is a catalytic residue.

Belongs to the GCKR-like family. MurNAc-6-P etherase subfamily. In terms of assembly, homodimer.

It carries out the reaction N-acetyl-D-muramate 6-phosphate + H2O = N-acetyl-D-glucosamine 6-phosphate + (R)-lactate. It participates in amino-sugar metabolism; 1,6-anhydro-N-acetylmuramate degradation. Its pathway is amino-sugar metabolism; N-acetylmuramate degradation. It functions in the pathway cell wall biogenesis; peptidoglycan recycling. In terms of biological role, specifically catalyzes the cleavage of the D-lactyl ether substituent of MurNAc 6-phosphate, producing GlcNAc 6-phosphate and D-lactate. Together with AnmK, is also required for the utilization of anhydro-N-acetylmuramic acid (anhMurNAc) either imported from the medium or derived from its own cell wall murein, and thus plays a role in cell wall recycling. This is N-acetylmuramic acid 6-phosphate etherase from Escherichia coli O81 (strain ED1a).